The sequence spans 284 residues: D-tagatose-1,6-bisphosphate aldolase subunit GatY (284 aa).

Aspartate 82 acts as the Proton donor in catalysis. Histidine 83 and histidine 180 together coordinate Zn(2+). Residue glycine 181 participates in dihydroxyacetone phosphate binding. Zn(2+) is bound at residue histidine 208. Residues glycine 209–serine 211 and asparagine 230–threonine 233 each bind dihydroxyacetone phosphate.

Belongs to the class II fructose-bisphosphate aldolase family. TagBP aldolase GatY subfamily. In terms of assembly, forms a complex with GatZ. The cofactor is Zn(2+).

It carries out the reaction D-tagatofuranose 1,6-bisphosphate = D-glyceraldehyde 3-phosphate + dihydroxyacetone phosphate. The protein operates within carbohydrate metabolism; D-tagatose 6-phosphate degradation; D-glyceraldehyde 3-phosphate and glycerone phosphate from D-tagatose 6-phosphate: step 2/2. Functionally, catalytic subunit of the tagatose-1,6-bisphosphate aldolase GatYZ, which catalyzes the reversible aldol condensation of dihydroxyacetone phosphate (DHAP or glycerone-phosphate) with glyceraldehyde 3-phosphate (G3P) to produce tagatose 1,6-bisphosphate (TBP). Requires GatZ subunit for full activity and stability. Is involved in the catabolism of galactitol. This Shigella sonnei (strain Ss046) protein is D-tagatose-1,6-bisphosphate aldolase subunit GatY.